Reading from the N-terminus, the 164-residue chain is MMKTSAIHSPFEAPNTISLVAGTGDSNNPLNAFDMSLLKSGIGNLNLIRISSIMPPKADIIPLPKIPQGSLVPTAYGYQISEIKGETVAAGISVAIPKDKELCGLIMEYECVGGKKECEDTVRNMAKEGFEMRGWEIDEIISIASEHTVENIGCAFAAAALWYK.

Serine 52 carries the pyruvic acid (Ser) modification.

The protein belongs to the PdaD family. Requires pyruvate as cofactor.

The enzyme catalyses L-arginine + H(+) = agmatine + CO2. This chain is Pyruvoyl-dependent arginine decarboxylase, found in Methanococcus maripaludis (strain C5 / ATCC BAA-1333).